A 117-amino-acid polypeptide reads, in one-letter code: Protein OPG035 (117 aa).

Belongs to the poxviridae OPG035 family.

Bcl-2-like protein which contributes to virulence by preventing host NF-kappa-B activation in response to pro-inflammatory stimuli such as TNF-alpha or IL1B. The chain is Protein OPG035 (OPG035) from Bos taurus (Bovine).